A 199-amino-acid polypeptide reads, in one-letter code: NAD(P)H dehydrogenase (quinone) (199 aa).

One can recognise a Flavodoxin-like domain in the interval 4-190; sequence MLVLYYSAYG…DGARFQGRRV (187 aa). FMN is bound by residues 10–15 and 78–80; these read SAYGHM and TRY. Residue tyrosine 12 participates in NAD(+) binding. Tryptophan 98 is a substrate binding site. FMN is bound by residues 113-119 and histidine 134; that span reads STATQYG. The interval 162–181 is disordered; the sequence is GMTTTADGDGSRQPSAQELD. Polar residues predominate over residues 163-177; the sequence is MTTTADGDGSRQPSA.

Belongs to the WrbA family. The cofactor is FMN.

It carries out the reaction a quinone + NADH + H(+) = a quinol + NAD(+). The enzyme catalyses a quinone + NADPH + H(+) = a quinol + NADP(+). The polypeptide is NAD(P)H dehydrogenase (quinone) (Brucella suis (strain ATCC 23445 / NCTC 10510)).